We begin with the raw amino-acid sequence, 462 residues long: Ribosomal protein uS12 methylthiotransferase RimO (462 aa).

Residues 22–133 (ASVAFLHLGC…IIEVLQRVRQ (112 aa)) form the MTTase N-terminal domain. 6 residues coordinate [4Fe-4S] cluster: Cys-31, Cys-67, Cys-96, Cys-171, Cys-175, and Cys-178. One can recognise a Radical SAM core domain in the interval 157-386 (TTGRFVSYLK…VAIQQPISAA (230 aa)). Residues 389–460 (QALIGQTVDV…LYDLTGEINH (72 aa)) form the TRAM domain.

It belongs to the methylthiotransferase family. RimO subfamily. [4Fe-4S] cluster serves as cofactor.

The protein resides in the cytoplasm. It catalyses the reaction L-aspartate(89)-[ribosomal protein uS12]-hydrogen + (sulfur carrier)-SH + AH2 + 2 S-adenosyl-L-methionine = 3-methylsulfanyl-L-aspartate(89)-[ribosomal protein uS12]-hydrogen + (sulfur carrier)-H + 5'-deoxyadenosine + L-methionine + A + S-adenosyl-L-homocysteine + 2 H(+). Functionally, catalyzes the methylthiolation of an aspartic acid residue of ribosomal protein uS12. This Prochlorococcus marinus (strain MIT 9211) protein is Ribosomal protein uS12 methylthiotransferase RimO.